The sequence spans 513 residues: ATP synthase subunit alpha (513 aa).

ATP is bound at residue 169–176 (GDRQTGKT).

Belongs to the ATPase alpha/beta chains family. F-type ATPases have 2 components, CF(1) - the catalytic core - and CF(0) - the membrane proton channel. CF(1) has five subunits: alpha(3), beta(3), gamma(1), delta(1), epsilon(1). CF(0) has three main subunits: a(1), b(2) and c(9-12). The alpha and beta chains form an alternating ring which encloses part of the gamma chain. CF(1) is attached to CF(0) by a central stalk formed by the gamma and epsilon chains, while a peripheral stalk is formed by the delta and b chains.

It localises to the cell inner membrane. The enzyme catalyses ATP + H2O + 4 H(+)(in) = ADP + phosphate + 5 H(+)(out). In terms of biological role, produces ATP from ADP in the presence of a proton gradient across the membrane. The alpha chain is a regulatory subunit. The sequence is that of ATP synthase subunit alpha from Shewanella amazonensis (strain ATCC BAA-1098 / SB2B).